The following is a 496-amino-acid chain: Alanine aminotransferase 1 (496 aa).

Ala2 is subject to N-acetylalanine. Phosphothreonine is present on Thr22. Lys314 carries the post-translational modification N6-(pyridoxal phosphate)lysine.

This sequence belongs to the class-I pyridoxal-phosphate-dependent aminotransferase family. Alanine aminotransferase subfamily. In terms of assembly, homodimer. It depends on pyridoxal 5'-phosphate as a cofactor. Liver, heart, skeletal muscle, etc.

The protein resides in the cytoplasm. The enzyme catalyses L-alanine + 2-oxoglutarate = pyruvate + L-glutamate. The protein operates within amino-acid degradation; L-alanine degradation via transaminase pathway; pyruvate from L-alanine: step 1/1. Its function is as follows. Catalyzes the reversible transamination between alanine and 2-oxoglutarate to form pyruvate and glutamate. Participates in cellular nitrogen metabolism and also in liver gluconeogenesis starting with precursors transported from skeletal muscles. In Rattus norvegicus (Rat), this protein is Alanine aminotransferase 1 (Gpt).